The following is a 419-amino-acid chain: uncharacterized protein (419 aa).

One can recognise an Obg domain in the interval 29–236 (PKFQDKIRIR…KLIELELKTI (208 aa)). One can recognise an OBG-type G domain in the interval 237-414 (CEIGLVGLPN…LVRGMTQLLQ (178 aa)). GTP is bound by residues 243–250 (GLPNAGKS), 295–299 (DIPGI), and 364–367 (ANKA).

It belongs to the TRAFAC class OBG-HflX-like GTPase superfamily. OBG GTPase family.

Its subcellular location is the mitochondrion. This is an uncharacterized protein from Schizosaccharomyces pombe (strain 972 / ATCC 24843) (Fission yeast).